We begin with the raw amino-acid sequence, 368 residues long: tRNA-specific 2-thiouridylase MnmA (368 aa).

ATP is bound by residues 10 to 17 and M36; that span reads AMSGGVDS. The Nucleophile role is filled by C108. A disulfide bridge links C108 with C206. G132 provides a ligand contact to ATP. An interaction with tRNA region spans residues 156–158; the sequence is KDQ. C206 functions as the Cysteine persulfide intermediate in the catalytic mechanism. Positions 312–313 are interaction with tRNA; it reads RY.

Belongs to the MnmA/TRMU family.

The protein localises to the cytoplasm. The catalysed reaction is S-sulfanyl-L-cysteinyl-[protein] + uridine(34) in tRNA + AH2 + ATP = 2-thiouridine(34) in tRNA + L-cysteinyl-[protein] + A + AMP + diphosphate + H(+). In terms of biological role, catalyzes the 2-thiolation of uridine at the wobble position (U34) of tRNA, leading to the formation of s(2)U34. This is tRNA-specific 2-thiouridylase MnmA from Natranaerobius thermophilus (strain ATCC BAA-1301 / DSM 18059 / JW/NM-WN-LF).